The primary structure comprises 481 residues: 2-succinylbenzoate--CoA ligase (481 aa).

The protein belongs to the ATP-dependent AMP-binding enzyme family. MenE subfamily.

It catalyses the reaction 2-succinylbenzoate + ATP + CoA = 2-succinylbenzoyl-CoA + AMP + diphosphate. Its pathway is quinol/quinone metabolism; 1,4-dihydroxy-2-naphthoate biosynthesis; 1,4-dihydroxy-2-naphthoate from chorismate: step 5/7. The protein operates within quinol/quinone metabolism; menaquinone biosynthesis. Its function is as follows. Converts 2-succinylbenzoate (OSB) to 2-succinylbenzoyl-CoA (OSB-CoA). The chain is 2-succinylbenzoate--CoA ligase from Bacillus mycoides (strain KBAB4) (Bacillus weihenstephanensis).